The primary structure comprises 237 residues: Class B acid phosphatase (237 aa).

An N-terminal signal peptide occupies residues methionine 1–alanine 23. Residue aspartate 69 is the Nucleophile of the active site. Residues aspartate 69 and aspartate 71 each coordinate Mg(2+). Aspartate 71 serves as the catalytic Proton donor. Residues threonine 137–glycine 138 and lysine 177 contribute to the substrate site. Aspartate 192 lines the Mg(2+) pocket.

The protein belongs to the class B bacterial acid phosphatase family. In terms of assembly, homotetramer. Mg(2+) is required as a cofactor.

Its subcellular location is the periplasm. It catalyses the reaction a phosphate monoester + H2O = an alcohol + phosphate. In terms of biological role, dephosphorylates several organic phosphate monoesters. Also has a phosphotransferase activity catalyzing the transfer of low-energy phosphate groups from organic phosphate monoesters to free hydroxyl groups of various organic compounds. The protein is Class B acid phosphatase of Proteus mirabilis (strain HI4320).